Reading from the N-terminus, the 269-residue chain is Intercellular adhesion molecule 4 (269 aa).

Residues 1–20 (SLFPLSLLFFLAAAYPGVGS) form the signal peptide. At 21 to 238 (ALGRRTKRAQ…MLAWSSAPTA (218 aa)) the chain is on the extracellular side. Ig-like C2-type domains are found at residues 60-122 (GKSV…TRWA) and 144-215 (GRKY…LNLD). N66, N76, N188, and N221 each carry an N-linked (GlcNAc...) asparagine glycan. Cystine bridges form between C67–C111, C67–C115, C71–C115, and C151–C208. The chain crosses the membrane as a helical span at residues 239–259 (LASVSIAALVGILLTVGAAYL). The Cytoplasmic segment spans residues 260–269 (CKCLAMKSQA).

It belongs to the immunoglobulin superfamily. ICAM family. N- and O-glycosylated.

The protein localises to the cell membrane. Functionally, ICAM proteins are ligands for the leukocyte adhesion protein LFA-1 (integrin alpha-L/beta-2). ICAM4 is also a ligand for alpha-4/beta-1 and alpha-V integrins. This chain is Intercellular adhesion molecule 4 (ICAM4), found in Pan troglodytes (Chimpanzee).